Here is a 229-residue protein sequence, read N- to C-terminus: Large ribosomal subunit protein uL1 (229 aa).

The protein belongs to the universal ribosomal protein uL1 family. In terms of assembly, part of the 50S ribosomal subunit.

Binds directly to 23S rRNA. The L1 stalk is quite mobile in the ribosome, and is involved in E site tRNA release. Its function is as follows. Protein L1 is also a translational repressor protein, it controls the translation of the L11 operon by binding to its mRNA. This is Large ribosomal subunit protein uL1 from Magnetococcus marinus (strain ATCC BAA-1437 / JCM 17883 / MC-1).